A 254-amino-acid chain; its full sequence is Pimeloyl-[acyl-carrier protein] methyl ester esterase (254 aa).

The 226-residue stretch at 16 to 241 folds into the AB hydrolase-1 domain; that stretch reads LVLLHGWGMN…QSSHAPFMTE (226 aa). Residues Trp22, 82–83, and 143–147 each bind substrate; these read SL and FMALQ. Ser82 (nucleophile) is an active-site residue. Residues Asp207 and His235 contribute to the active site. His235 contributes to the substrate binding site.

The protein belongs to the AB hydrolase superfamily. Carboxylesterase BioH family. Monomer.

Its subcellular location is the cytoplasm. The catalysed reaction is 6-carboxyhexanoyl-[ACP] methyl ester + H2O = 6-carboxyhexanoyl-[ACP] + methanol + H(+). It functions in the pathway cofactor biosynthesis; biotin biosynthesis. Its function is as follows. The physiological role of BioH is to remove the methyl group introduced by BioC when the pimeloyl moiety is complete. It allows to synthesize pimeloyl-ACP via the fatty acid synthetic pathway through the hydrolysis of the ester bonds of pimeloyl-ACP esters. The chain is Pimeloyl-[acyl-carrier protein] methyl ester esterase from Vibrio campbellii (strain ATCC BAA-1116).